The following is a 142-amino-acid chain: Hemoglobin subunit zeta (142 aa).

Serine 2 is subject to N-acetylserine. The Globin domain maps to 2-142 (SLTKTEGTII…VSSVLTEKYR (141 aa)). Threonine 29 carries the phosphothreonine modification. Serine 53 carries the post-translational modification Phosphoserine. Histidine 59 contributes to the heme b binding site. A phosphoserine mark is found at serine 73 and serine 82. Residue histidine 88 participates in heme b binding.

It belongs to the globin family. Heterotetramer of two zeta chains and beta-type chains.

In terms of biological role, the zeta chain is an alpha-type chain of mammalian embryonic hemoglobin. This chain is Hemoglobin subunit zeta (HBZ1), found in Pan troglodytes (Chimpanzee).